The primary structure comprises 4367 residues: Dynein heavy chain, cytoplasmic (4367 aa).

Pro residues predominate over residues 1-13; that stretch reads MMDSVPSPPPQPS. The segment at 1 to 20 is disordered; that stretch reads MMDSVPSPPPQPSPDANGVA. Positions 1 to 1904 are stem; the sequence is MMDSVPSPPP…HIKMANAKLN (1904 aa). Coiled coils occupy residues 676–693, 1176–1215, 1327–1351, 1557–1574, and 1637–1668; these read ARQI…VEQV, IKFA…EAVR, LTHF…KEAL, YKEF…LNRV, and NIPN…KERV. AAA stretches follow at residues 1905-2130, 2202-2460, 2566-2815, and 2909-3179; these read YGFE…VLVS, EAIR…FTVA, EVNT…WVRG, and TFCE…QGKI. Residue 1943-1950 participates in ATP binding; that stretch reads GPAGTGKT. Positions 2195–2218 form a coiled coil; that stretch reads ASLEKLQEAIRRLAAERQLVVNDI. ATP is bound by residues 2240–2247, 2605–2612, and 2947–2954; these read GNSGSGKS, GPPGSGKT, and GVSGSGKT. 3 coiled-coil regions span residues 3193–3296, 3423–3481, and 3778–3809; these read QYVK…LARA, PLRE…SRVQ, and VIET…VEQI. The tract at residues 3193–3481 is stalk; it reads QYVKLYNEKR…AIKAEMSRVQ (289 aa). AAA stretches follow at residues 3565–3794 and 4003–4215; these read LSTA…EISA and AERF…VIDT.

It belongs to the dynein heavy chain family. In terms of assembly, consists of at least two heavy chains and a number of intermediate and light chains.

Its subcellular location is the cytoplasm. The protein localises to the cytoskeleton. Its function is as follows. Cytoplasmic dynein acts as a motor for the intracellular retrograde motility of vesicles and organelles along microtubules. Dynein has ATPase activity; the force-producing power stroke is thought to occur on release of ADP. Required to maintain uniform nuclear distribution in hyphae. The chain is Dynein heavy chain, cytoplasmic (ro-1) from Neurospora crassa (strain ATCC 24698 / 74-OR23-1A / CBS 708.71 / DSM 1257 / FGSC 987).